The sequence spans 1487 residues: Probable lysine-specific demethylase SE14 (1487 aa).

The interval 1–23 (MPPQPPPAASASASAPDPAVPAW) is disordered. Residues 9 to 22 (ASASASAPDPAVPA) show a composition bias toward low complexity. The JmjN domain occupies 30–71 (APEYRPTESEFADPIAFLSRVEREAAAYGICKVIPPHPRPSR). Residues 86–104 (CDAPAPSPAAASDSSIPPS) are compositionally biased toward low complexity. The tract at residues 86–113 (CDAPAPSPAAASDSSIPPSSSSPPPVSA) is disordered. In terms of domain architecture, JmjC spans 232 to 398 (NSPWNLQAIA…FAKEAAVRRA (167 aa)). Positions 275, 277, and 366 each coordinate Fe cation. Disordered stretches follow at residues 494–555 (SCSK…DDGD) and 684–718 (YGDT…PDVE). Basic and acidic residues-rich tracts occupy residues 498 to 507 (APEKKGEDGP) and 542 to 551 (QAPEGEKLDT). The C2H2-type 1; degenerate zinc finger occupies 1377–1400 (FQCDIEFCDMTFETKAELRAHQRN). 3 consecutive C2H2-type zinc fingers follow at residues 1400-1424 (NICT…QCVH), 1430-1454 (FKCP…IRVH), and 1460-1486 (YKCS…KFNH).

The cofactor is Fe(2+).

Its subcellular location is the nucleus. Functionally, histone demethylase that demethylates 'Lys-4' (H3K4me) of histone H3. Involved in the control of flowering time. Has a suppressive effect on floral transition under long day conditions through the demethylation of H3K4me3 in the promoter region of the flower-promoting signal HD3B/RFT1. The chain is Probable lysine-specific demethylase SE14 (SE14) from Oryza sativa subsp. japonica (Rice).